The primary structure comprises 717 residues: Ribosomal RNA large subunit methyltransferase K/L (717 aa).

Residues 43–154 (IGYKACLWSR…KGKANITLDL (112 aa)) form the THUMP domain.

It belongs to the methyltransferase superfamily. RlmKL family.

It is found in the cytoplasm. It catalyses the reaction guanosine(2445) in 23S rRNA + S-adenosyl-L-methionine = N(2)-methylguanosine(2445) in 23S rRNA + S-adenosyl-L-homocysteine + H(+). It carries out the reaction guanosine(2069) in 23S rRNA + S-adenosyl-L-methionine = N(2)-methylguanosine(2069) in 23S rRNA + S-adenosyl-L-homocysteine + H(+). Its function is as follows. Specifically methylates the guanine in position 2445 (m2G2445) and the guanine in position 2069 (m7G2069) of 23S rRNA. The sequence is that of Ribosomal RNA large subunit methyltransferase K/L from Aeromonas hydrophila subsp. hydrophila (strain ATCC 7966 / DSM 30187 / BCRC 13018 / CCUG 14551 / JCM 1027 / KCTC 2358 / NCIMB 9240 / NCTC 8049).